Here is a 124-residue protein sequence, read N- to C-terminus: Acidic phospholipase A2 (124 aa).

7 disulfide bridges follow: cysteine 26/cysteine 116, cysteine 28/cysteine 44, cysteine 43/cysteine 95, cysteine 49/cysteine 124, cysteine 50/cysteine 88, cysteine 57/cysteine 81, and cysteine 75/cysteine 86. Tyrosine 27, glycine 29, and glycine 31 together coordinate Ca(2+). Residue histidine 47 is part of the active site. A Ca(2+)-binding site is contributed by aspartate 48. Aspartate 89 is a catalytic residue.

The protein belongs to the phospholipase A2 family. Group II subfamily. D49 sub-subfamily. As to quaternary structure, monomer. Requires Ca(2+) as cofactor. In terms of tissue distribution, expressed by the venom gland.

It is found in the secreted. The enzyme catalyses a 1,2-diacyl-sn-glycero-3-phosphocholine + H2O = a 1-acyl-sn-glycero-3-phosphocholine + a fatty acid + H(+). Functionally, snake venom phospholipase A2 (PLA2) that acts in vivo as an anti-thrombotic agent. Inhibits platelet aggregation induced by ADP, arachidonic acid, and thrombin. PLA2 catalyzes the calcium-dependent hydrolysis of the 2-acyl groups in 3-sn-phosphoglycerides. This chain is Acidic phospholipase A2, found in Gloydius halys (Chinese water mocassin).